The primary structure comprises 449 residues: Tubulin alpha-8 chain (449 aa).

The short motif at 1–4 (MREC) is the MREC motif element. GTP-binding residues include Gln-11, Glu-71, Ser-140, Gly-144, Thr-145, Thr-179, Asn-206, and Asn-228. Residue Glu-71 coordinates Mg(2+). Glu-254 is an active-site residue.

This sequence belongs to the tubulin family. As to quaternary structure, dimer of alpha and beta chains. A typical microtubule is a hollow water-filled tube with an outer diameter of 25 nm and an inner diameter of 15 nM. Alpha-beta heterodimers associate head-to-tail to form protofilaments running lengthwise along the microtubule wall with the beta-tubulin subunit facing the microtubule plus end conferring a structural polarity. Microtubules usually have 13 protofilaments but different protofilament numbers can be found in some organisms and specialized cells. The cofactor is Mg(2+). Some glutamate residues at the C-terminus are polyglycylated, resulting in polyglycine chains on the gamma-carboxyl group. Glycylation is mainly limited to tubulin incorporated into axonemes (cilia and flagella) whereas glutamylation is prevalent in neuronal cells, centrioles, axonemes, and the mitotic spindle. Both modifications can coexist on the same protein on adjacent residues, and lowering polyglycylation levels increases polyglutamylation, and reciprocally. Cilia and flagella glycylation is required for their stability and maintenance. Flagella glycylation controls sperm motility. Post-translationally, some glutamate residues at the C-terminus are polyglutamylated, resulting in polyglutamate chains on the gamma-carboxyl group. Polyglutamylation plays a key role in microtubule severing by spastin (SPAST). SPAST preferentially recognizes and acts on microtubules decorated with short polyglutamate tails: severing activity by SPAST increases as the number of glutamates per tubulin rises from one to eight, but decreases beyond this glutamylation threshold. Glutamylation is also involved in cilia motility. In terms of processing, the C-terminal phenylalanine residue is cleaved by MATCAP1/KIAA0895L.

Its subcellular location is the cytoplasm. The protein localises to the cytoskeleton. It catalyses the reaction GTP + H2O = GDP + phosphate + H(+). Tubulin is the major constituent of microtubules, a cylinder consisting of laterally associated linear protofilaments composed of alpha- and beta-tubulin heterodimers. Microtubules grow by the addition of GTP-tubulin dimers to the microtubule end, where a stabilizing cap forms. Below the cap, tubulin dimers are in GDP-bound state, owing to GTPase activity of alpha-tubulin. This chain is Tubulin alpha-8 chain (Tuba8), found in Rattus norvegicus (Rat).